A 565-amino-acid polypeptide reads, in one-letter code: Urocanate hydratase (565 aa).

NAD(+)-binding positions include 61-62 (GG), Gln139, 185-187 (GMG), Glu205, Arg210, 251-252 (NA), 272-276 (QTSAH), 282-283 (YL), and Tyr331. Cys419 is a catalytic residue. The segment at 453–472 (LDSGSVSSPNRETESMKDGS) is disordered. The span at 463–472 (RETESMKDGS) shows a compositional bias: basic and acidic residues. Position 501 (Gly501) interacts with NAD(+).

This sequence belongs to the urocanase family. NAD(+) is required as a cofactor.

The protein resides in the cytoplasm. The catalysed reaction is 4-imidazolone-5-propanoate = trans-urocanate + H2O. The protein operates within amino-acid degradation; L-histidine degradation into L-glutamate; N-formimidoyl-L-glutamate from L-histidine: step 2/3. Catalyzes the conversion of urocanate to 4-imidazolone-5-propionate. The sequence is that of Urocanate hydratase from Pseudomonas syringae.